Reading from the N-terminus, the 734-residue chain is Photosystem I P700 chlorophyll a apoprotein A2 (734 aa).

The next 8 membrane-spanning stretches (helical) occupy residues 46–69 (IFASHFGQLAIIFLWTSGNLFHVA), 135–158 (LYTGALFLLFLSAISLIAGWLHLQ), 175–199 (LNHHLSGLFGVSSLAWTGHLVHVAI), 273–291 (IAHHHLAIAFVFLVAGHMY), 330–353 (IHFQLGLALASLGVITSLVAQHMY), 369–395 (AALYTHHQYIAGFIMTGAFAHGAIFFI), 417–439 (AIKSHLSWASLFLGFHTLGLYVH), and 517–535 (FLVHHAIALGLHTTTLILV). [4Fe-4S] cluster is bound by residues Cys559 and Cys568. A run of 2 helical transmembrane segments spans residues 575–596 (AFYLAVFWMLNTIGWVTFYWHW) and 643–665 (LSVWAWMFLFGHLVWATGFMFLI). Residues His654, Met662, and Tyr670 each contribute to the chlorophyll a site. Residue Trp671 coordinates phylloquinone. Residues 707-727 (LVGLAHFSVGYIFTYAAFLIA) form a helical membrane-spanning segment.

This sequence belongs to the PsaA/PsaB family. The PsaA/B heterodimer binds the P700 chlorophyll special pair and subsequent electron acceptors. PSI consists of a core antenna complex that captures photons, and an electron transfer chain that converts photonic excitation into a charge separation. The eukaryotic PSI reaction center is composed of at least 11 subunits. P700 is a chlorophyll a/chlorophyll a' dimer, A0 is one or more chlorophyll a, A1 is one or both phylloquinones and FX is a shared 4Fe-4S iron-sulfur center. serves as cofactor.

The protein resides in the plastid. Its subcellular location is the chloroplast thylakoid membrane. It catalyses the reaction reduced [plastocyanin] + hnu + oxidized [2Fe-2S]-[ferredoxin] = oxidized [plastocyanin] + reduced [2Fe-2S]-[ferredoxin]. Functionally, psaA and PsaB bind P700, the primary electron donor of photosystem I (PSI), as well as the electron acceptors A0, A1 and FX. PSI is a plastocyanin-ferredoxin oxidoreductase, converting photonic excitation into a charge separation, which transfers an electron from the donor P700 chlorophyll pair to the spectroscopically characterized acceptors A0, A1, FX, FA and FB in turn. Oxidized P700 is reduced on the lumenal side of the thylakoid membrane by plastocyanin. The sequence is that of Photosystem I P700 chlorophyll a apoprotein A2 from Amborella trichopoda.